The chain runs to 198 residues: Recombination protein RecR (198 aa).

A C4-type zinc finger spans residues 57–72 (CAQCRTLTEHSLCEYC). Positions 80–175 (SLLCIVESPA…RTTRIAHGIP (96 aa)) constitute a Toprim domain.

It belongs to the RecR family.

Functionally, may play a role in DNA repair. It seems to be involved in an RecBC-independent recombinational process of DNA repair. It may act with RecF and RecO. This Methylococcus capsulatus (strain ATCC 33009 / NCIMB 11132 / Bath) protein is Recombination protein RecR.